The chain runs to 420 residues: Threonine aspartase 1 (420 aa).

The interval 1-23 is disordered; sequence MTMEKGMSSGEGLPSRSSQVSAG. Thr-234 serves as the catalytic Nucleophile.

This sequence belongs to the Ntn-hydrolase family. Intramolecular proteolysis generates 2 subunits, alpha and beta, which reassemble through a non-covalent association to form the fully active enzyme.

Its function is as follows. Protease responsible for KMT2A/MLL1 processing and activation. It also activates KMT2D/MLL2. Through substrate activation, it controls the expression of HOXA genes, and the expression of key cell cycle regulators including CCNA1, CCNB1, CCNE1 and CDKN2A. The chain is Threonine aspartase 1 (TASP1) from Homo sapiens (Human).